We begin with the raw amino-acid sequence, 312 residues long: Non-structural protein 12A (312 aa).

Residues 1–23 show a composition bias toward low complexity; it reads MFKSGSGSLKRSGSISSVKSFSG. 3 disordered regions span residues 1-37, 62-99, and 111-161; these read MFKS…RGSV, FVPE…QNAD, and ESSK…GTGD. Basic and acidic residues predominate over residues 63–77; the sequence is VPEKTKSEGNLKDKS. The span at 78–98 shows a compositional bias: polar residues; that stretch reads SVITGNFGSSGPINAHTNQNA. Residues 122–134 are compositionally biased toward basic and acidic residues; sequence DARHTATDSRLSQ.

Belongs to the phytoreovirus non-structural protein Pns12A family.

It localises to the host cytoplasm. Its function is as follows. Constituent of viral factories. Binds to ssRNA and dsRNA. This chain is Non-structural protein 12A, found in Alopecurus aequalis (Barnyard grass).